Consider the following 352-residue polypeptide: C-C chemokine receptor type 5 (352 aa).

Residues 1-30 lie on the Extracellular side of the membrane; sequence MDYQVSSPIYDIDYGPSEPCRKIDVKQMGA. At Y3 the chain carries Sulfotyrosine. O-linked (GalNAc...) serine glycans are attached at residues S6 and S7. 2 positions are modified to sulfotyrosine: Y10 and Y14. 2 disulfides stabilise this stretch: C20-C269 and C101-C178. The chain crosses the membrane as a helical span at residues 31–58; it reads QLLPPLYSLVFLFGFVGNMLVVLILINC. Over 59–68 the chain is Cytoplasmic; sequence KRLKSMTDIY. A helical transmembrane segment spans residues 69–89; it reads LLNLAISDLLFLFTIPFWAHY. The Extracellular portion of the chain corresponds to 90–102; that stretch reads AAGQWDFGNTMCQ. Residues 103–124 traverse the membrane as a helical segment; it reads FLTALYFIGFFSGIFFIILLTI. Residues 125 to 141 are Cytoplasmic-facing; that stretch reads DRYLAIVHAVFALKART. The helical transmembrane segment at 142 to 166 threads the bilayer; sequence VTFGVVTSVITWVVAVFASLPGIIF. Over 167–198 the chain is Extracellular; it reads TRSQKEGYHYSCSPHFPFSQYRFWKNFETLKM. Residues 199–218 traverse the membrane as a helical segment; the sequence is VILGLVLPLLVMVICYSGIL. Residues 219-235 are Cytoplasmic-facing; sequence KTLLRCRNEKKRHRAVR. Residues 236-260 form a helical membrane-spanning segment; sequence LIFTIMIVYFLFWAPYNIVLLINTY. The Extracellular segment spans residues 261–277; the sequence is PDFFGVNNCNSSNRLDQ. Residues 278–301 traverse the membrane as a helical segment; that stretch reads AMQVTETLGMTHCCVNPIIYAFVG. Residues 302–352 are Cytoplasmic-facing; sequence EKFRNYLVIFFQKHIAKRFCKCCSIFQKEAPERANSVYTRSTGEQEISVGL. 3 S-palmitoyl cysteine lipidation sites follow: C321, C323, and C324. Phosphoserine; by BARK1 occurs at positions 337, 342, and 349.

It belongs to the G-protein coupled receptor 1 family. In terms of assembly, interacts with PRAF2. Efficient ligand binding to CCL3/MIP-1alpha and CCL4/MIP-1beta requires sulfation, O-glycosylation and sialic acid modifications. Glycosylation on Ser-6 is required for efficient binding of CCL4. Interacts with GRK2. Interacts with ARRB1 and ARRB2. Interacts with CNIH4. Interacts with S100A4; this interaction stimulates T-lymphocyte chemotaxis. Sulfated on at least 2 of the N-terminal tyrosines. Sulfation is required for efficient binding of the chemokines, CCL3 and CCL4. In terms of processing, palmitoylation in the C-terminal is important for cell surface expression. Post-translationally, phosphorylation on serine residues in the C-terminal is stimulated by binding CC chemokines especially by APO-RANTES. O-glycosylated, but not N-glycosylated. Ser-6 appears to be the major site even if Ser-7 may be also O-glycosylated. Also sialylated glycans present which contribute to chemokine binding. Ser-17 may also be glycosylated and, if so, with small moieties such as a T-antigen.

It is found in the cell membrane. Its function is as follows. Receptor for a number of inflammatory CC-chemokines including CCL3/MIP-1-alpha, CCL4/MIP-1-beta and RANTES and subsequently transduces a signal by increasing the intracellular calcium ion level. May play a role in the control of granulocytic lineage proliferation or differentiation. Participates in T-lymphocyte migration to the infection site by acting as a chemotactic receptor. The protein is C-C chemokine receptor type 5 (CCR5) of Saimiri sciureus (Common squirrel monkey).